We begin with the raw amino-acid sequence, 82 residues long: uncharacterized protein (82 aa).

Belongs to the chlamydial CPn_0710/CT_666/TC_0037 family.

This is an uncharacterized protein from Chlamydia muridarum (strain MoPn / Nigg).